A 262-amino-acid chain; its full sequence is Ribose-5-phosphate isomerase A (262 aa).

Substrate-binding positions include 33-36 (TGST), 89-92 (DGAD), and 102-105 (KGGG). Residue Glu-111 is the Proton acceptor of the active site. Lys-129 contributes to the substrate binding site.

The protein belongs to the ribose 5-phosphate isomerase family. As to quaternary structure, homodimer.

The enzyme catalyses aldehydo-D-ribose 5-phosphate = D-ribulose 5-phosphate. Its pathway is carbohydrate degradation; pentose phosphate pathway; D-ribose 5-phosphate from D-ribulose 5-phosphate (non-oxidative stage): step 1/1. Catalyzes the reversible conversion of ribose-5-phosphate to ribulose 5-phosphate. This chain is Ribose-5-phosphate isomerase A, found in Ruegeria sp. (strain TM1040) (Silicibacter sp.).